A 43-amino-acid chain; its full sequence is Protein PsbN (43 aa).

Residues 5–27 (TVLSIFISSLLLGITGYSIYTAF) form a helical membrane-spanning segment.

Belongs to the PsbN family.

It localises to the plastid. The protein localises to the chloroplast thylakoid membrane. Functionally, may play a role in photosystem I and II biogenesis. This chain is Protein PsbN, found in Porphyra purpurea (Red seaweed).